We begin with the raw amino-acid sequence, 323 residues long: Fructose-1,6-bisphosphatase class 1 (323 aa).

4 residues coordinate Mg(2+): Glu90, Asp111, Leu113, and Asp114. Substrate is bound by residues 114–117 (DGSS), Tyr222, and Lys253. Position 259 (Glu259) interacts with Mg(2+).

This sequence belongs to the FBPase class 1 family. In terms of assembly, homotetramer. Mg(2+) is required as a cofactor.

The protein resides in the cytoplasm. It catalyses the reaction beta-D-fructose 1,6-bisphosphate + H2O = beta-D-fructose 6-phosphate + phosphate. Its pathway is carbohydrate biosynthesis; gluconeogenesis. This chain is Fructose-1,6-bisphosphatase class 1, found in Pelobacter propionicus (strain DSM 2379 / NBRC 103807 / OttBd1).